The sequence spans 30 residues: Glucagon-like peptide (30 aa).

At Arg-30 the chain carries Arginine amide.

This sequence belongs to the glucagon family.

It localises to the secreted. This Anguilla anguilla (European freshwater eel) protein is Glucagon-like peptide.